The following is a 124-amino-acid chain: Ribonuclease pancreatic (124 aa).

Basic and acidic residues predominate over residues K1 to M13. Positions K1–N24 are disordered. Substrate-binding residues include K7 and R10. The active-site Proton acceptor is the H12. 4 disulfides stabilise this stretch: C26–C84, C40–C95, C58–C110, and C65–C72. Substrate contacts are provided by residues K41–T45, K66, and R85. H119 acts as the Proton donor in catalysis.

This sequence belongs to the pancreatic ribonuclease family. In terms of assembly, monomer. Interacts with and forms tight 1:1 complexes with RNH1. Dimerization of two such complexes may occur. Interaction with RNH1 inhibits this protein. Pancreas.

It is found in the secreted. The enzyme catalyses an [RNA] containing cytidine + H2O = an [RNA]-3'-cytidine-3'-phosphate + a 5'-hydroxy-ribonucleotide-3'-[RNA].. The catalysed reaction is an [RNA] containing uridine + H2O = an [RNA]-3'-uridine-3'-phosphate + a 5'-hydroxy-ribonucleotide-3'-[RNA].. Functionally, endonuclease that catalyzes the cleavage of RNA on the 3' side of pyrimidine nucleotides. Acts on single-stranded and double-stranded RNA. The chain is Ribonuclease pancreatic (RNASE1) from Dama dama (Fallow deer).